We begin with the raw amino-acid sequence, 491 residues long: Chromosomal replication initiator protein DnaA (491 aa).

Positions 1 to 69 (MTTWDKCLKK…TIQECHGNDL (69 aa)) are domain I, interacts with DnaA modulators. Residues 69–154 (LIIEYSNKKF…KEDEEYSFGL (86 aa)) are domain II. Residues 155-371 (PLKEKYVFDS…GALNRVLTTS (217 aa)) are domain III, AAA+ region. 4 residues coordinate ATP: Gly-199, Gly-201, Lys-202, and Thr-203. The segment at 372-491 (KFNHKDPTIE…YELLLDKISR (120 aa)) is domain IV, binds dsDNA.

It belongs to the DnaA family. As to quaternary structure, oligomerizes as a right-handed, spiral filament on DNA at oriC.

It localises to the cytoplasm. Plays an essential role in the initiation and regulation of chromosomal replication. ATP-DnaA binds to the origin of replication (oriC) to initiate formation of the DNA replication initiation complex once per cell cycle. Binds the DnaA box (a 9 base pair repeat at the origin) and separates the double-stranded (ds)DNA. Forms a right-handed helical filament on oriC DNA; dsDNA binds to the exterior of the filament while single-stranded (ss)DNA is stabiized in the filament's interior. The ATP-DnaA-oriC complex binds and stabilizes one strand of the AT-rich DNA unwinding element (DUE), permitting loading of DNA polymerase. After initiation quickly degrades to an ADP-DnaA complex that is not apt for DNA replication. Binds acidic phospholipids. In Francisella tularensis subsp. novicida (strain U112), this protein is Chromosomal replication initiator protein DnaA.